We begin with the raw amino-acid sequence, 289 residues long: Pyridoxal kinase PdxY (289 aa).

Substrate contacts are provided by residues S9 and 44 to 45 (TQ). ATP is bound by residues D112, A144, E149, K183, and 210-213 (RPLV). D225 is a substrate binding site.

Belongs to the pyridoxine kinase family. PdxY subfamily. In terms of assembly, homodimer. The cofactor is Mg(2+).

It carries out the reaction pyridoxal + ATP = pyridoxal 5'-phosphate + ADP + H(+). Its pathway is cofactor metabolism; pyridoxal 5'-phosphate salvage; pyridoxal 5'-phosphate from pyridoxal: step 1/1. Functionally, pyridoxal kinase involved in the salvage pathway of pyridoxal 5'-phosphate (PLP). Catalyzes the phosphorylation of pyridoxal to PLP. This Proteus mirabilis protein is Pyridoxal kinase PdxY.